A 245-amino-acid chain; its full sequence is Orotidine 5'-phosphate decarboxylase (245 aa).

Residues Asp22, Lys44, 71-80, Thr131, Arg192, Gln201, Gly221, and Arg222 contribute to the substrate site; that span reads DLKFHDIPNT. Lys73 acts as the Proton donor in catalysis.

It belongs to the OMP decarboxylase family. Type 1 subfamily. As to quaternary structure, homodimer.

The catalysed reaction is orotidine 5'-phosphate + H(+) = UMP + CO2. Its pathway is pyrimidine metabolism; UMP biosynthesis via de novo pathway; UMP from orotate: step 2/2. Its function is as follows. Catalyzes the decarboxylation of orotidine 5'-monophosphate (OMP) to uridine 5'-monophosphate (UMP). The protein is Orotidine 5'-phosphate decarboxylase of Escherichia coli O139:H28 (strain E24377A / ETEC).